Consider the following 263-residue polypeptide: Small ribosomal subunit protein eS4 (263 aa).

Residues 42–104 (LPLIVFLRNR…TGEHFRLVYD (63 aa)) form the S4 RNA-binding domain.

Belongs to the eukaryotic ribosomal protein eS4 family.

The chain is Small ribosomal subunit protein eS4 (RPS4Y1) from Pongo pygmaeus (Bornean orangutan).